A 263-amino-acid polypeptide reads, in one-letter code: Protein STK_14130 (263 aa).

This sequence belongs to the CinA family.

The polypeptide is Protein STK_14130 (Sulfurisphaera tokodaii (strain DSM 16993 / JCM 10545 / NBRC 100140 / 7) (Sulfolobus tokodaii)).